We begin with the raw amino-acid sequence, 333 residues long: T-cell surface glycoprotein CD1b (333 aa).

The first 17 residues, 1-17, serve as a signal peptide directing secretion; it reads MLLLPFQLLAVLFPGGN. Residues 18–303 lie on the Extracellular side of the membrane; it reads SEHAFQGPTS…YWRNPTSIGS (286 aa). N-linked (GlcNAc...) asparagine glycans are attached at residues Asn38, Asn75, and Asn146. Intrachain disulfides connect Cys120–Cys184, Cys149–Cys163, and Cys224–Cys279. Residues 185–295 form the Ig-like domain; the sequence is PRYLLGVLNA…LEGQDIILYW (111 aa). N-linked (GlcNAc...) asparagine glycosylation occurs at Asn258. Residues 304 to 324 form a helical membrane-spanning segment; that stretch reads IVLAIIVPSLLLLLCLALWYM. Topologically, residues 325-333 are cytoplasmic; that stretch reads RRRSYQNIP. Residues 329-332 carry the Internalization signal motif; the sequence is YQNI.

As to quaternary structure, heterodimer with B2M (beta-2-microglobulin). Interacts with saposin C. In terms of tissue distribution, expressed on cortical thymocytes, on certain T-cell leukemias, and in various other tissues.

It is found in the cell membrane. The protein resides in the endosome membrane. Its subcellular location is the lysosome membrane. Antigen-presenting protein that binds self and non-self lipid and glycolipid antigens and presents them to T-cell receptors on natural killer T-cells. The protein is T-cell surface glycoprotein CD1b (CD1B) of Homo sapiens (Human).